The chain runs to 137 residues: Nucleoside diphosphate kinase (137 aa).

K9, F57, R85, T91, R102, and N112 together coordinate ATP. H115 functions as the Pros-phosphohistidine intermediate in the catalytic mechanism.

This sequence belongs to the NDK family. Homotetramer. The cofactor is Mg(2+).

The protein localises to the cytoplasm. It carries out the reaction a 2'-deoxyribonucleoside 5'-diphosphate + ATP = a 2'-deoxyribonucleoside 5'-triphosphate + ADP. The catalysed reaction is a ribonucleoside 5'-diphosphate + ATP = a ribonucleoside 5'-triphosphate + ADP. Its function is as follows. Major role in the synthesis of nucleoside triphosphates other than ATP. The ATP gamma phosphate is transferred to the NDP beta phosphate via a ping-pong mechanism, using a phosphorylated active-site intermediate. The polypeptide is Nucleoside diphosphate kinase (Citrifermentans bemidjiense (strain ATCC BAA-1014 / DSM 16622 / JCM 12645 / Bem) (Geobacter bemidjiensis)).